Reading from the N-terminus, the 1159-residue chain is Syntaxin-binding protein 5-like (1159 aa).

The segment at 1–37 is disordered; it reads MKKFRKVLDGLTTSSPVNPGGSPGCGSAAGTPSAAPT. Residues 25-37 are compositionally biased toward low complexity; it reads CGSAAGTPSAAPT. WD repeat units lie at residues 67–108, 115–154, 159–195, 214–248, 254–286, 307–350, 358–392, 414–491, 519–628, and 642–703; these read TALA…CHSQ, VLQM…SLKF, ITFC…GYVI, HLSD…DFRI, IHSV…TAKP, PILK…KAIT, IVDF…VVDL, TCTA…YKLK, QMIS…ELVV, and TCLD…STSG. Disordered stretches follow at residues 571–604 and 690–770; these read SDTE…SVRD and LTRS…KAQS. Composition is skewed to polar residues over residues 699 to 713 and 721 to 739; these read QSTS…NQVS and SPTS…SQPC. WD repeat units follow at residues 808–865, 874–946, 951–995, and 1009–1032; these read VTTL…TGTV, RFGF…QACL, ITES…LDVS, and CFTN…TYSQ. Residues 1094-1154 form the v-SNARE coiled-coil homology domain; that stretch reads GIEGMKAAAG…HELMLKCKDK (61 aa).

Belongs to the WD repeat L(2)GL family.

It is found in the cytoplasm. The protein localises to the cell membrane. Its subcellular location is the membrane. May play a role in vesicle trafficking and exocytosis. The sequence is that of Syntaxin-binding protein 5-like (stxbp5l) from Danio rerio (Zebrafish).